The primary structure comprises 383 residues: Dynein axonemal assembly factor 11 (383 aa).

LRR repeat units lie at residues 20 to 45, 46 to 66, 67 to 89, and 90 to 110; these read LSNL…ACRE, LEIL…QHLK, YLKY…GCEA, and LERL…ERLR. Residues 128–146 enclose the LRRCT domain; the sequence is VAGYRAYVVHALPQLRELD. Residues 201–244 are disordered; the sequence is KGERLYGHTPEERLQMLREKEEEERRKREEQRERERSSQFGAIR. A coiled-coil region spans residues 211-239; it reads EERLQMLREKEEEERRKREEQRERERSSQ.

Belongs to the tilB family.

Its subcellular location is the cytoplasm. It is found in the cytoskeleton. It localises to the flagellum basal body. In terms of biological role, involved in the regulation of the cell cycle; is required for the basal body replication and new flagellum biogenesis. The chain is Dynein axonemal assembly factor 11 (dnaaf11) from Trypanosoma brucei brucei.